The following is a 516-amino-acid chain: uncharacterized protein (516 aa).

This is an uncharacterized protein from Azotobacter chroococcum mcd 1.